The following is a 943-amino-acid chain: Translation initiation factor IF-2 (943 aa).

The segment at Ser-30–Glu-357 is disordered. Basic and acidic residues-rich tracts occupy residues Pro-69–Ser-82, Phe-112–Asn-137, Gln-145–Asn-155, Asp-163–Ala-196, and Arg-224–Gln-253. Positions Val-254–Lys-266 are enriched in low complexity. Residues Lys-296–Lys-309 show a composition bias toward basic and acidic residues. The segment covering Asn-313–Lys-332 has biased composition (low complexity). One can recognise a tr-type G domain in the interval Glu-445–Lys-614. A G1 region spans residues Gly-454–Thr-461. GTP is bound at residue Gly-454–Thr-461. The segment at Gly-479–His-483 is G2. Positions Asp-500 to Gly-503 are G3. GTP is bound by residues Asp-500–His-504 and Asn-554–Asp-557. A G4 region spans residues Asn-554–Asp-557. Residues Ser-590–Lys-592 form a G5 region.

It belongs to the TRAFAC class translation factor GTPase superfamily. Classic translation factor GTPase family. IF-2 subfamily.

It is found in the cytoplasm. Its function is as follows. One of the essential components for the initiation of protein synthesis. Protects formylmethionyl-tRNA from spontaneous hydrolysis and promotes its binding to the 30S ribosomal subunits. Also involved in the hydrolysis of GTP during the formation of the 70S ribosomal complex. In Streptococcus thermophilus (strain ATCC BAA-250 / LMG 18311), this protein is Translation initiation factor IF-2.